We begin with the raw amino-acid sequence, 607 residues long: MSWRNQGITGSNNIPLGSRRRFAGDGEEEDGARSVTPSAPSSVTNGDRDRDRDGPVYSNDRDVKRGRSPERSEDGPKRRKKRNRWGEATENKAAGLMGLPTAIVANMTSEQLEAYTLHLRIEEITQKLKIDDVVPADGDRSPSPAPQYDNHGRRVNTREYRYRKKLEDERHKLIEKAMKTIPNYHPPSDYRRPTKTQEKVYVPVNDYPEINFIGLLIGPRGNTLKKMETESGAKIAIRGKGSVKEGKGRSDAAHSSNQEEDLHCLIMADTEEKVNKAKKLIHNIIETAASIPEGQNELKRNQLRELAALNGTLRDDENQACQNCGQIGHRKYDCPEKQNYTANIICRVCGNAGHMARDCPDRQRGASWRNDGPGAGRTAGRIGSSGGGDAVDREYEQLMQELGGTGAAPARIEAGPGSFSNGPSGGNGDAKPWQRGPTGGPAPWRTRNMDRDHEGGPGGPPSGPSGGPAPWARDRNERRHDDRDRGDSYYGGDRRHDDYGRGSSGGGGPAPWHQPPPGAPSAPAIPTAPAYPGAYGGYPGYGAPPGMGAAPPPGLPPPPPGAPPGLSGPLNALIQQYANAAPPPPPPAAEAPPPPPMDLPPPPPPGA.

Composition is skewed to polar residues over residues 1–15 (MSWR…NNIP) and 35–45 (VTPSAPSSVTN). Disordered stretches follow at residues 1–92 (MSWR…TENK) and 134–155 (VPAD…GRRV). Residues 46–76 (GDRDRDRDGPVYSNDRDVKRGRSPERSEDGP) show a composition bias toward basic and acidic residues. The KH domain occupies 201–281 (YVPVNDYPEI…EKVNKAKKLI (81 aa)). 2 consecutive CCHC-type zinc fingers follow at residues 319–336 (QACQ…DCPE) and 344–361 (IICR…DCPD). 2 disordered regions span residues 363–390 (QRGA…GGDA) and 407–607 (AAPA…PPGA). Residues 373-389 (PGAGRTAGRIGSSGGGD) show a composition bias toward gly residues. Over residues 472–500 (ARDRNERRHDDRDRGDSYYGGDRRHDDYG) the composition is skewed to basic and acidic residues. The segment covering 521-533 (SAPAIPTAPAYPG) has biased composition (low complexity). Residues 534-545 (AYGGYPGYGAPP) are compositionally biased toward gly residues. Pro residues-rich tracts occupy residues 550-563 (APPP…PGAP) and 581-607 (APPP…PPGA).

It belongs to the BBP/SF1 family.

The protein resides in the nucleus. In terms of biological role, necessary for the splicing of pre-mRNA. Has a role in the recognition of the branch site (5'-UACUAAC-3'), the pyrimidine tract and the 3'-splice site at the 3'-end of introns. This chain is Branchpoint-bridging protein (bbp-1), found in Neurospora crassa (strain ATCC 24698 / 74-OR23-1A / CBS 708.71 / DSM 1257 / FGSC 987).